Here is a 306-residue protein sequence, read N- to C-terminus: Mating type protein SmtA-1 (306 aa).

Residues 49-104 (APKKKVNGFMGFRSYYSPLFSQFPQKARSPFMTILWQHDPFHNEWDFMCSVYSSIR) constitute a DNA-binding region (alpha box).

It belongs to the MATALPHA1 family.

The protein resides in the nucleus. Its function is as follows. Mating type proteins are sequence specific DNA-binding proteins that act as master switches in fungal differentiation by controlling gene expression in a cell type-specific fashion. Transcriptional activator that induces the transcription of alpha-specific genes. This is Mating type protein SmtA-1 (SMTA1) from Sordaria macrospora (strain ATCC MYA-333 / DSM 997 / K(L3346) / K-hell).